The sequence spans 295 residues: Fatty acyl-CoA reductase (295 aa).

An NADP(+)-binding site is contributed by 21–28; sequence TGASSGIG. A substrate-binding site is contributed by Ser153. Residue Tyr166 is the Proton acceptor of the active site.

Belongs to the short-chain dehydrogenases/reductases (SDR) family.

The enzyme catalyses hexadecanal + NADP(+) + CoA = hexadecanoyl-CoA + NADPH + H(+). Catalyzes the NADPH-dependent reduction of long chain acyl-CoA (with chain lengths of 14 to 22 carbons) to the corresponding aldehyde. This chain is Fatty acyl-CoA reductase (acr1), found in Acinetobacter baylyi (strain ATCC 33305 / BD413 / ADP1).